The primary structure comprises 230 residues: Early E1A protein (230 aa).

The interval 40 to 48 (PSLHDLFDL) is interaction with RB1 in competition with E2F1. The LXCXE motif, interaction with host RB1 motif lies at 106–110 (LLCLE). Residues 145–163 (CLRCAYYQEQGENSICGLC) fold into a zinc finger. The segment at 189-230 (KPGSRKRSAVTSRGSVESSKRPCLPEPEQTEPLDLSLKPRPQ) is disordered. The PXDLS motif, CTBP-binding signature appears at 220-224 (PLDLS). Positions 226–230 (KPRPQ) match the Nuclear localization signal motif.

The protein belongs to the adenoviridae E1A protein family. In terms of assembly, interacts with host UBE2I; this interaction interferes with polySUMOylation. Interacts with host RB1; this interaction induces the aberrant dissociation of RB1-E2F1 complex thereby disrupting the activity of RB1 and activating E2F1-regulated genes. Interacts with host ATF7; the interaction enhances ATF7-mediated viral transactivation activity which requires the zinc binding domains of both proteins. Isoform early E1A 32 kDa protein and isoform early E1A 26 kDa protein interact (via N-terminus) with CUL1 and E3 ubiquitin ligase RBX1; these interactions inhibit RBX1-CUL1-dependent elongation reaction of ubiquitin chains and attenuate ubiquitination of SCF(FBXW7) target proteins. Interacts (via PXLXP motif) with host ZMYND11/BS69 (via MYND-type zinc finger); this interaction inhibits E1A mediated transactivation. Interacts with host EP300; this interaction stimulates the acetylation of RB1 by recruiting EP300 and RB1 into a multimeric-protein complex. Interacts with host CTBP1 and CTBP2; this interaction seems to potentiate viral replication. Interacts with host DCAF7. Interacts with host DYRK1A. Interacts with host KPNA4; this interaction allows E1A import into the host nucleus. Interacts with host EP400; this interaction stabilizes MYC. Interacts with host TBP protein; this interaction probably disrupts the TBP-TATA complex.

The protein localises to the host nucleus. Its function is as follows. Plays a role in viral genome replication by driving entry of quiescent cells into the cell cycle. Stimulation of progression from G1 to S phase allows the virus to efficiently use the cellular DNA replicating machinery to achieve viral genome replication. E1A protein has both transforming and trans-activating activities. Induces the disassembly of the E2F1 transcription factor from RB1 by direct competition for the same binding site on RB1, with subsequent transcriptional activation of E2F1-regulated S-phase genes and of the E2 region of the adenoviral genome. Release of E2F1 leads to the ARF-mediated inhibition of MDM2 and causes TP53/p53 to accumulate because it is not targeted for degradation by MDM2-mediated ubiquitination anymore. This increase in TP53, in turn, would arrest the cell proliferation and direct its death but this effect is counteracted by the viral protein E1B-55K. Inactivation of the ability of RB1 to arrest the cell cycle is critical for cellular transformation, uncontrolled cellular growth and proliferation induced by viral infection. Interaction with RBX1 and CUL1 inhibits ubiquitination of the proteins targeted by SCF(FBXW7) ubiquitin ligase complex, and may be linked to unregulated host cell proliferation. The tumorigenesis-restraining activity of E1A may be related to the disruption of the host CtBP-CtIP complex through the CtBP binding motif. This chain is Early E1A protein, found in Canine adenovirus serotype 1 (strain CLL) (CAdV-1).